The following is a 130-amino-acid chain: Glycine cleavage system H protein (130 aa).

In terms of domain architecture, Lipoyl-binding spans 22 to 103 (KAYIGISDCA…PYGSWIAAIE (82 aa)). Position 63 is an N6-lipoyllysine (lysine 63).

It belongs to the GcvH family. The glycine cleavage system is composed of four proteins: P, T, L and H. The cofactor is (R)-lipoate.

Its function is as follows. The glycine cleavage system catalyzes the degradation of glycine. The H protein shuttles the methylamine group of glycine from the P protein to the T protein. This chain is Glycine cleavage system H protein, found in Clostridium botulinum (strain Okra / Type B1).